Here is a 306-residue protein sequence, read N- to C-terminus: Mitochondrial brown fat uncoupling protein 1 (306 aa).

The Mitochondrial intermembrane segment spans residues 1–10 (MVGTTATDVA). The chain crosses the membrane as a helical span at residues 11–32 (PTMGVKIFSAGVAACLADVITF). Solcar repeat units lie at residues 11–102 (PTMG…VQEF), 110–200 (PSLR…MKGA), and 209–294 (DDVP…LKRE). At 33-73 (PLDTAKVRLQIQGECQTTSGIRYKGVLGTITTLAKTEGPLK) the chain is on the mitochondrial matrix side. Lys56 lines the fatty acid 16:0 pocket. Residues 74 to 96 (LYSGLPAGLQRQISFASLRIGLY) form a helical membrane-spanning segment. Over 97–115 (DTVQEFWGGEEATPSLRSK) the chain is Mitochondrial intermembrane. A helical transmembrane segment spans residues 116–132 (ICAGLTTGGVAVFIGQP). The Mitochondrial matrix portion of the chain corresponds to 133–177 (TEVVKVRLQAQSHLHGLKPRYTGTYNAYRIIATTESLSTLWKGTT). A helical transmembrane segment spans residues 178–194 (PNLLRNIIINCTELVTY). Residues 195–211 (DLMKGALVRNDILADDV) lie on the Mitochondrial intermembrane side of the membrane. Residues 212 to 231 (PCHLLSALIAGFCTTLLSSP) form a helical membrane-spanning segment. At 232–265 (VDVVKTRFINSPQGQYTSVPSCAMSMLTKEGPTA) the chain is on the mitochondrial matrix side. Residue Cys253 is modified to Cysteine sulfenic acid (-SOH). A helical membrane pass occupies residues 266-288 (FFKGFAPSFLRLASWNVIMFVCF). Lys268 is a fatty acid 16:0 binding site. At 289 to 306 (EKLKRELMKSRQTVDCAT) the chain is on the mitochondrial intermembrane side.

This sequence belongs to the mitochondrial carrier (TC 2.A.29) family. Most probably functions as a monomer. Binds one purine nucleotide per monomer. However, has also been suggested to function as a homodimer or a homotetramer. Tightly associates with cardiolipin in the mitochondrion inner membrane; may stabilize and regulate its activity. Post-translationally, may undergo sulfenylation upon cold exposure. May increase the sensitivity of UCP1 thermogenic function to the activation by noradrenaline probably through structural effects. In terms of processing, may undergo ubiquitin-mediated proteasomal degradation.

It is found in the mitochondrion inner membrane. The catalysed reaction is H(+)(in) = H(+)(out). With respect to regulation, has no constitutive proton transporter activity and has to be activated by long-chain fatty acids/LCFAs. Inhibited by purine nucleotides. Both purine nucleotides and LCFAs bind the cytosolic side of the transporter and directly compete to activate or inhibit it. Activated by noradrenaline and reactive oxygen species. Despite lacking canonical translational encoding for selenocysteine, a small pool of the protein has been observed to selectively incorporate selenocysteine at 'Cys-253'. Selenocysteine-modified protein is highly sensitive to redox modification and may constitute a pool of protein highly sensitive to activation by elevated levels of reactive oxygen species (ROS). Mitochondrial protein responsible for thermogenic respiration, a specialized capacity of brown adipose tissue and beige fat that participates in non-shivering adaptive thermogenesis to temperature and diet variations and more generally to the regulation of energy balance. Functions as a long-chain fatty acid/LCFA and proton symporter, simultaneously transporting one LCFA and one proton through the inner mitochondrial membrane. However, LCFAs remaining associated with the transporter via their hydrophobic tails, it results in an apparent transport of protons activated by LCFAs. Thereby, dissipates the mitochondrial proton gradient and converts the energy of substrate oxydation into heat instead of ATP. Regulates the production of reactive oxygen species/ROS by mitochondria. The chain is Mitochondrial brown fat uncoupling protein 1 from Ochotona dauurica (Daurian pika).